The chain runs to 421 residues: Probable G-protein coupled receptor 151 (421 aa).

Residues methionine 1–serine 44 lie on the Extracellular side of the membrane. Asparagine 18 carries N-linked (GlcNAc...) asparagine glycosylation. The chain crosses the membrane as a helical span at residues leucine 45 to leucine 65. Over histidine 66–serine 74 the chain is Cytoplasmic. Residues methionine 75 to alanine 95 traverse the membrane as a helical segment. Residues proline 96–histidine 122 lie on the Extracellular side of the membrane. An intrachain disulfide couples cysteine 114 to cysteine 190. The chain crosses the membrane as a helical span at residues methionine 123 to alanine 143. Topologically, residues serine 144–threonine 156 are cytoplasmic. The helical transmembrane segment at isoleucine 157–phenylalanine 177 threads the bilayer. Residues phenylalanine 178–leucine 204 lie on the Extracellular side of the membrane. A helical membrane pass occupies residues phenylalanine 205–phenylalanine 225. At tryptophan 226–threonine 258 the chain is on the cytoplasmic side. A helical transmembrane segment spans residues alanine 259 to leucine 279. Topologically, residues lysine 280–glycine 289 are extracellular. The chain crosses the membrane as a helical span at residues phenylalanine 290–leucine 310. Topologically, residues methionine 311–asparagine 421 are cytoplasmic. Disordered regions lie at residues isoleucine 346 to valine 381 and histidine 394 to asparagine 421. Basic and acidic residues-rich tracts occupy residues aspartate 364 to aspartate 379 and proline 409 to asparagine 421.

This sequence belongs to the G-protein coupled receptor 1 family. In terms of tissue distribution, exclusively expressed in neurons of the habenular complex. The expression is particularly prominent in the medial habenular nucleus, whereas the lateral habenular nucleus exhibited a lower level of expression.

The protein resides in the cell membrane. Its function is as follows. Orphan receptor. The polypeptide is Probable G-protein coupled receptor 151 (Gpr151) (Rattus norvegicus (Rat)).